Consider the following 545-residue polypeptide: Thermosome subunit beta (545 aa).

This sequence belongs to the TCP-1 chaperonin family. In terms of assembly, forms a Heterooligomeric complex of two stacked eight-membered rings.

Molecular chaperone; binds unfolded polypeptides in vitro, and has a weak ATPase activity. The protein is Thermosome subunit beta (thsB) of Thermococcus sp. (strain KS-8).